A 718-amino-acid polypeptide reads, in one-letter code: K(+)-insensitive pyrophosphate-energized proton pump (718 aa).

The next 6 helical transmembrane spans lie at 6–26 (AVLV…IWAI), 61–81 (IAIV…LNAA), 83–103 (GFLI…HVSV), 112–132 (AASL…AITG), 133–153 (LLVA…LTVW), and 168–188 (VSLG…GGIF). K190 serves as a coordination point for substrate. 4 residues coordinate Mg(2+): D193, D197, N220, and D223. A run of 6 helical transmembrane segments spans residues 235-255 (LFET…IFFH), 265-285 (LYPL…TFFV), 300-320 (GLIA…TLTV), 335-355 (GTNL…IVVI), 385-405 (GLAV…GGII), and 413-433 (LFGT…IVAL). D441 contacts Mg(2+). The next 4 helical transmembrane spans lie at 472-492 (AVTK…LFAA), 524-544 (YVVA…GMAM), 593-613 (IIPS…VLLI), and 620-640 (AFAA…FVAI). Ca(2+) contacts are provided by D650, D682, and D686. K689 is a binding site for substrate. Residues 695–715 (AVNPAIKITNIVALLLLAVLA) form a helical membrane-spanning segment.

It belongs to the H(+)-translocating pyrophosphatase (TC 3.A.10) family. K(+)-insensitive subfamily. As to quaternary structure, homodimer. Requires Mg(2+) as cofactor.

It is found in the cell inner membrane. It carries out the reaction diphosphate + H2O + H(+)(in) = 2 phosphate + 2 H(+)(out). Its function is as follows. Proton pump that utilizes the energy of pyrophosphate hydrolysis as the driving force for proton movement across the membrane. Generates a proton motive force. The chain is K(+)-insensitive pyrophosphate-energized proton pump from Brucella melitensis biotype 1 (strain ATCC 23456 / CCUG 17765 / NCTC 10094 / 16M).